The chain runs to 163 residues: MHTRAIYPGTFDPITNGHADLIERAAKLFKHVIIGIAANPSKQPRFTLEERVELVNRVTAHLDNVEVVGFSGLLVDFAKEQRASVLVRGLRAVSDFEYEFQLANMNRRLSPDLESVFLTPAEENSFISSTLVKEVALHGGDVSQFVHPEVASALAAKLNLAKA.

Thr10 serves as a coordination point for substrate. ATP-binding positions include 10–11 (TF) and His18. Positions 42, 74, and 88 each coordinate substrate. ATP-binding positions include 89 to 91 (GLR), Glu99, and 124 to 130 (NSFISST).

Belongs to the bacterial CoaD family. In terms of assembly, homohexamer. Requires Mg(2+) as cofactor.

The protein localises to the cytoplasm. The enzyme catalyses (R)-4'-phosphopantetheine + ATP + H(+) = 3'-dephospho-CoA + diphosphate. The protein operates within cofactor biosynthesis; coenzyme A biosynthesis; CoA from (R)-pantothenate: step 4/5. In terms of biological role, reversibly transfers an adenylyl group from ATP to 4'-phosphopantetheine, yielding dephospho-CoA (dPCoA) and pyrophosphate. The protein is Phosphopantetheine adenylyltransferase of Shewanella sp. (strain MR-4).